We begin with the raw amino-acid sequence, 45 residues long: Defensin Tk-AMP-D4 (45 aa).

Disulfide bonds link Cys-3/Cys-45, Cys-14/Cys-34, Cys-20/Cys-39, and Cys-24/Cys-41.

Functionally, plant defense peptide. This Triticum kiharae (Wheat) protein is Defensin Tk-AMP-D4.